Consider the following 307-residue polypeptide: 4-diphosphocytidyl-2-C-methyl-D-erythritol kinase (307 aa).

K9 is a catalytic residue. 94-104 (PIGAGLAGGSS) serves as a coordination point for ATP. D136 is an active-site residue.

The protein belongs to the GHMP kinase family. IspE subfamily.

It catalyses the reaction 4-CDP-2-C-methyl-D-erythritol + ATP = 4-CDP-2-C-methyl-D-erythritol 2-phosphate + ADP + H(+). It functions in the pathway isoprenoid biosynthesis; isopentenyl diphosphate biosynthesis via DXP pathway; isopentenyl diphosphate from 1-deoxy-D-xylulose 5-phosphate: step 3/6. Functionally, catalyzes the phosphorylation of the position 2 hydroxy group of 4-diphosphocytidyl-2C-methyl-D-erythritol. This chain is 4-diphosphocytidyl-2-C-methyl-D-erythritol kinase, found in Synechococcus sp. (strain CC9902).